Here is a 608-residue protein sequence, read N- to C-terminus: Dihydroxyacetone kinase (608 aa).

The DhaK domain maps to 8–357 (YKKDLVLSHL…LDHKTSAPGW (350 aa)). Substrate contacts are provided by residues 53–56 (GSGH), K105, and D110. Catalysis depends on H234, which acts as the Tele-hemiaminal-histidine intermediate. In terms of domain architecture, DhaL spans 392–599 (KLYADLLESG…LAALISGITD (208 aa)). ATP-binding positions include 421-424 (DGDC), 467-468 (TS), 523-524 (TL), and 584-586 (DPG).

It belongs to the dihydroxyacetone kinase (DAK) family.

It is found in the cytoplasm. It carries out the reaction dihydroxyacetone + ATP = dihydroxyacetone phosphate + ADP + H(+). The enzyme catalyses D-glyceraldehyde + ATP = D-glyceraldehyde 3-phosphate + ADP + H(+). Its pathway is polyol metabolism; glycerol fermentation; glycerone phosphate from glycerol (oxidative route): step 2/2. Its function is as follows. Catalyzes both the phosphorylation of dihydroxyacetone and of glyceraldehyde. This Komagataella pastoris (Yeast) protein is Dihydroxyacetone kinase (DAK).